We begin with the raw amino-acid sequence, 372 residues long: NAD(P)H-quinone oxidoreductase subunit 1 (372 aa).

Helical transmembrane passes span 27–47, 97–117, 128–148, 176–196, 204–224, 266–286, 308–328, and 347–367; these read IIWL…GVLV, ILFT…WLIV, VGIG…GLLM, LALS…IDIV, ILSW…ICAL, ILSA…PIPV, SIGI…AILL, and FLLP…LAFP.

The protein belongs to the complex I subunit 1 family. As to quaternary structure, NDH-1 is composed of at least 11 different subunits.

It is found in the cellular thylakoid membrane. It carries out the reaction a plastoquinone + NADH + (n+1) H(+)(in) = a plastoquinol + NAD(+) + n H(+)(out). It catalyses the reaction a plastoquinone + NADPH + (n+1) H(+)(in) = a plastoquinol + NADP(+) + n H(+)(out). Functionally, NDH-1 shuttles electrons from an unknown electron donor, via FMN and iron-sulfur (Fe-S) centers, to quinones in the respiratory and/or the photosynthetic chain. The immediate electron acceptor for the enzyme in this species is believed to be plastoquinone. Couples the redox reaction to proton translocation, and thus conserves the redox energy in a proton gradient. This chain is NAD(P)H-quinone oxidoreductase subunit 1, found in Prochlorococcus marinus (strain MIT 9301).